An 87-amino-acid polypeptide reads, in one-letter code: Cell division topological specificity factor (87 aa).

Belongs to the MinE family.

In terms of biological role, prevents the cell division inhibition by proteins MinC and MinD at internal division sites while permitting inhibition at polar sites. This ensures cell division at the proper site by restricting the formation of a division septum at the midpoint of the long axis of the cell. This is Cell division topological specificity factor from Vibrio vulnificus (strain CMCP6).